The following is a 93-amino-acid chain: Aspartyl/glutamyl-tRNA(Asn/Gln) amidotransferase subunit C (93 aa).

This sequence belongs to the GatC family. As to quaternary structure, heterotrimer of A, B and C subunits.

It carries out the reaction L-glutamyl-tRNA(Gln) + L-glutamine + ATP + H2O = L-glutaminyl-tRNA(Gln) + L-glutamate + ADP + phosphate + H(+). The enzyme catalyses L-aspartyl-tRNA(Asn) + L-glutamine + ATP + H2O = L-asparaginyl-tRNA(Asn) + L-glutamate + ADP + phosphate + 2 H(+). In terms of biological role, allows the formation of correctly charged Asn-tRNA(Asn) or Gln-tRNA(Gln) through the transamidation of misacylated Asp-tRNA(Asn) or Glu-tRNA(Gln) in organisms which lack either or both of asparaginyl-tRNA or glutaminyl-tRNA synthetases. The reaction takes place in the presence of glutamine and ATP through an activated phospho-Asp-tRNA(Asn) or phospho-Glu-tRNA(Gln). The protein is Aspartyl/glutamyl-tRNA(Asn/Gln) amidotransferase subunit C of Methanocella arvoryzae (strain DSM 22066 / NBRC 105507 / MRE50).